The following is a 326-amino-acid chain: Nucleotide sugar transporter SLC35D2 (326 aa).

At methionine 1–arginine 15 the chain is on the extracellular side. The chain crosses the membrane as a helical span at residues leucine 16–leucine 36. Topologically, residues leucine 37 to glycine 41 are cytoplasmic. The chain crosses the membrane as a helical span at residues phenylalanine 42 to valine 62. The Extracellular portion of the chain corresponds to phenylalanine 63 to glutamine 130. Residues tyrosine 131 to glycine 151 traverse the membrane as a helical segment. The Cytoplasmic portion of the chain corresponds to serine 152–threonine 155. Residues phenylalanine 156–valine 176 traverse the membrane as a helical segment. Topologically, residues tyrosine 177–lysine 189 are extracellular. The helical transmembrane segment at tyrosine 190–serine 210 threads the bilayer. Topologically, residues threonine 211–asparagine 225 are cytoplasmic. Residues valine 226–threonine 246 traverse the membrane as a helical segment. At alanine 247 to asparagine 253 the chain is on the extracellular side. A helical transmembrane segment spans residues serine 254–valine 276. The Cytoplasmic segment spans residues glycine 277–tyrosine 280. A helical transmembrane segment spans residues isoleucine 281–leucine 303. The Extracellular segment spans residues threonine 304–serine 326.

The protein belongs to the TPT transporter family. SLC35D subfamily.

The protein localises to the golgi apparatus membrane. The enzyme catalyses UMP(out) + UDP-N-acetyl-alpha-D-glucosamine(in) = UMP(in) + UDP-N-acetyl-alpha-D-glucosamine(out). It catalyses the reaction UMP(out) + UDP-alpha-D-glucose(in) = UMP(in) + UDP-alpha-D-glucose(out). In terms of biological role, nucleotide sugar antiporter transporting UDP-N-acetylglucosamine (UDP-GlcNAc) and UDP-glucose (UDP-Glc) from the cytosol into the lumen of the Golgi in exchange of UMP. By supplying UDP-N-acetylglucosamine, a donor substrate to heparan sulfate synthases, probably takes part in the synthesis of these glycoconjugates. The polypeptide is Nucleotide sugar transporter SLC35D2 (Mus musculus (Mouse)).